The chain runs to 337 residues: Fructose-1,6-bisphosphatase class 1 (337 aa).

4 residues coordinate Mg(2+): E92, D114, L116, and D117. Substrate contacts are provided by residues 117 to 120, N209, and K275; that span reads DGSS. E281 provides a ligand contact to Mg(2+).

Belongs to the FBPase class 1 family. Homotetramer. It depends on Mg(2+) as a cofactor.

The protein localises to the cytoplasm. The enzyme catalyses beta-D-fructose 1,6-bisphosphate + H2O = beta-D-fructose 6-phosphate + phosphate. It participates in carbohydrate biosynthesis; gluconeogenesis. This Thiobacillus denitrificans (strain ATCC 25259 / T1) protein is Fructose-1,6-bisphosphatase class 1.